Here is a 644-residue protein sequence, read N- to C-terminus: uncharacterized protein (644 aa).

Positions 65–117 (DSDVETTGGGGRGSTTSTEDRIDEHDDAIEDDGVSNEEDENQDAEQEQEVDLN) are disordered. A compositionally biased stretch (acidic residues) spans 89-114 (HDDAIEDDGVSNEEDENQDAEQEQEV).

This is an uncharacterized protein from Arabidopsis thaliana (Mouse-ear cress).